The following is a 351-amino-acid chain: Minor outer capsid protein P9 (351 aa).

Residues 245 to 310 form a disordered region; the sequence is GGVPAALPQP…VPSGNVSARG (66 aa). Residues 285-297 show a composition bias toward basic and acidic residues; it reads MIRKKVETSKDGP.

The protein belongs to the phytoreovirus minor outer capsid protein P9 family.

It localises to the virion. The protein localises to the host cytoplasm. Functionally, minor outer capsid protein. This Rice dwarf virus (isolate Akita) (RDV) protein is Minor outer capsid protein P9.